The primary structure comprises 260 residues: NifU-like protein C1709.19c (260 aa).

Positions 161 to 231 (IKELIETSIR…IPEVENVVQV (71 aa)) are nifU.

The protein belongs to the NifU family.

This Schizosaccharomyces pombe (strain 972 / ATCC 24843) (Fission yeast) protein is NifU-like protein C1709.19c.